The primary structure comprises 83 residues: Small ribosomal subunit protein bS18 (83 aa).

A disordered region spans residues 1–23 (MKQRNNAKRVRLEQTRRPKKNPL).

It belongs to the bacterial ribosomal protein bS18 family. Part of the 30S ribosomal subunit. Forms a tight heterodimer with protein bS6.

Its function is as follows. Binds as a heterodimer with protein bS6 to the central domain of the 16S rRNA, where it helps stabilize the platform of the 30S subunit. In Corynebacterium efficiens (strain DSM 44549 / YS-314 / AJ 12310 / JCM 11189 / NBRC 100395), this protein is Small ribosomal subunit protein bS18.